Reading from the N-terminus, the 312-residue chain is DNA-directed RNA polymerase subunit alpha (312 aa).

Residues 1-226 are alpha N-terminal domain (alpha-NTD); sequence MIEFEKPNIT…EHLDLFTDLT (226 aa). The interval 244–312 is alpha C-terminal domain (alpha-CTD); the sequence is DHVLERTIEE…DLGLGLKNDK (69 aa).

The protein belongs to the RNA polymerase alpha chain family. As to quaternary structure, homodimer. The RNAP catalytic core consists of 2 alpha, 1 beta, 1 beta' and 1 omega subunit. When a sigma factor is associated with the core the holoenzyme is formed, which can initiate transcription.

It catalyses the reaction RNA(n) + a ribonucleoside 5'-triphosphate = RNA(n+1) + diphosphate. In terms of biological role, DNA-dependent RNA polymerase catalyzes the transcription of DNA into RNA using the four ribonucleoside triphosphates as substrates. The protein is DNA-directed RNA polymerase subunit alpha of Streptococcus gordonii (strain Challis / ATCC 35105 / BCRC 15272 / CH1 / DL1 / V288).